A 1001-amino-acid polypeptide reads, in one-letter code: Protein MEI2-like 4 (1001 aa).

The disordered stretch occupies residues 100-120 (HANLPPSPWRPDQETGRQTDS). 2 RRM domains span residues 275–348 (RTLF…YSIP) and 360–433 (GTIV…TSRL). 2 disordered regions span residues 767–815 (GGPS…KKQY) and 941–1001 (FHSD…PAKD). Over residues 793-803 (PGERMRSRRND) the composition is skewed to basic and acidic residues. The span at 978–994 (DISITSVNCDTSTNGVD) shows a compositional bias: polar residues.

In terms of biological role, probable RNA-binding protein that may play a role in growth regulation. In Oryza sativa subsp. japonica (Rice), this protein is Protein MEI2-like 4 (ML4).